The following is a 445-amino-acid chain: 23S rRNA (uracil(1939)-C(5))-methyltransferase RlmD (445 aa).

In terms of domain architecture, TRAM spans 12-70; that stretch reads SKQLSSKLSLNVTQLDHLGAGIAHHQGKIVFINGALPGETVQVQLTEQKKKFSRAKLLK. The [4Fe-4S] cluster site is built by cysteine 83, cysteine 89, cysteine 92, and cysteine 171. S-adenosyl-L-methionine contacts are provided by glutamine 278, phenylalanine 307, asparagine 312, glutamate 328, aspartate 355, and aspartate 375. The Nucleophile role is filled by cysteine 401.

This sequence belongs to the class I-like SAM-binding methyltransferase superfamily. RNA M5U methyltransferase family. RlmD subfamily.

It catalyses the reaction uridine(1939) in 23S rRNA + S-adenosyl-L-methionine = 5-methyluridine(1939) in 23S rRNA + S-adenosyl-L-homocysteine + H(+). Functionally, catalyzes the formation of 5-methyl-uridine at position 1939 (m5U1939) in 23S rRNA. The protein is 23S rRNA (uracil(1939)-C(5))-methyltransferase RlmD of Shewanella piezotolerans (strain WP3 / JCM 13877).